We begin with the raw amino-acid sequence, 372 residues long: Aminomethyltransferase (372 aa).

This sequence belongs to the GcvT family. The glycine cleavage system is composed of four proteins: P, T, L and H.

The catalysed reaction is N(6)-[(R)-S(8)-aminomethyldihydrolipoyl]-L-lysyl-[protein] + (6S)-5,6,7,8-tetrahydrofolate = N(6)-[(R)-dihydrolipoyl]-L-lysyl-[protein] + (6R)-5,10-methylene-5,6,7,8-tetrahydrofolate + NH4(+). In terms of biological role, the glycine cleavage system catalyzes the degradation of glycine. The sequence is that of Aminomethyltransferase from Burkholderia orbicola (strain MC0-3).